The primary structure comprises 339 residues: NADH-quinone oxidoreductase subunit H (339 aa).

Helical transmembrane passes span 7 to 27, 77 to 97, 112 to 132, 149 to 169, 180 to 200, 235 to 255, 276 to 296, and 315 to 335; these read LFWI…AVAY, VLFV…WAVI, LLYI…AGWA, VVSY…AAGS, AGGI…VYWI, VFFL…AVMF, VPGV…YLWF, and VLIP…VTGF.

It belongs to the complex I subunit 1 family. As to quaternary structure, NDH-1 is composed of 14 different subunits. Subunits NuoA, H, J, K, L, M, N constitute the membrane sector of the complex.

The protein localises to the cell inner membrane. The catalysed reaction is a quinone + NADH + 5 H(+)(in) = a quinol + NAD(+) + 4 H(+)(out). Functionally, NDH-1 shuttles electrons from NADH, via FMN and iron-sulfur (Fe-S) centers, to quinones in the respiratory chain. The immediate electron acceptor for the enzyme in this species is believed to be ubiquinone. Couples the redox reaction to proton translocation (for every two electrons transferred, four hydrogen ions are translocated across the cytoplasmic membrane), and thus conserves the redox energy in a proton gradient. This subunit may bind ubiquinone. This Alkalilimnicola ehrlichii (strain ATCC BAA-1101 / DSM 17681 / MLHE-1) protein is NADH-quinone oxidoreductase subunit H.